Here is a 537-residue protein sequence, read N- to C-terminus: Glucose-6-phosphate isomerase (537 aa).

E355 (proton donor) is an active-site residue. Catalysis depends on residues H386 and K501.

It belongs to the GPI family.

The protein resides in the cytoplasm. The enzyme catalyses alpha-D-glucose 6-phosphate = beta-D-fructose 6-phosphate. It functions in the pathway carbohydrate biosynthesis; gluconeogenesis. It participates in carbohydrate degradation; glycolysis; D-glyceraldehyde 3-phosphate and glycerone phosphate from D-glucose: step 2/4. Functionally, catalyzes the reversible isomerization of glucose-6-phosphate to fructose-6-phosphate. The chain is Glucose-6-phosphate isomerase from Protochlamydia amoebophila (strain UWE25).